A 489-amino-acid polypeptide reads, in one-letter code: Cytochrome P450 2C3 (489 aa).

Cysteine 434 contributes to the heme binding site.

Belongs to the cytochrome P450 family. The cofactor is heme.

The protein resides in the endoplasmic reticulum membrane. The protein localises to the microsome membrane. It carries out the reaction an organic molecule + reduced [NADPH--hemoprotein reductase] + O2 = an alcohol + oxidized [NADPH--hemoprotein reductase] + H2O + H(+). Functionally, cytochromes P450 are a group of heme-thiolate monooxygenases. In liver microsomes, this enzyme is involved in an NADPH-dependent electron transport pathway. It oxidizes a variety of structurally unrelated compounds, including steroids, fatty acids, and xenobiotics. This Oryctolagus cuniculus (Rabbit) protein is Cytochrome P450 2C3 (CYP2C3).